The primary structure comprises 502 residues: MEDIIIGVVALAAVLLFFLYQKPKTKRYKLPPGPSPLPVIGNLLQLQKLNPQRFFAGWAKKYGPILSYRIGSRTMVVISSAELAKELLKTQDVNFADRPPHRGHEFISYGRRDMALNHYTPYYREIRKMGMNHLFSPTRVATFKHVREEEARRMMDKINKAADKSEVVDISELMLTFTNSVVCRQAFGKKYNEDGEEMKRFIKILYGTQSVLGKIFFSDFFPYCGFLDDLSGLTAYMKECFERQDTYIQEVVNETLDPKRVKPETESMIDLLMGIYKEQPFASEFTVDNVKAVILDIVVAGTDTAAAAVVWGMTYLMKYPQVLKKAQAEVREYMKEKGSTFVTEDDVKNLPYFRALVKETLRIEPVIPLLIPRACIQDTKIAGYDIPAGTTVNVNAWAVSRDEKEWGPNPDEFRPERFLEKEVDFKGTDYEFIPFGSGRRMCPGMRLGAAMLEVPYANLLLSFNFKLPNGMKPDDINMDVMTGLAMHKSQHLKLVPEKVNKY.

The helical transmembrane segment at 1–21 (MEDIIIGVVALAAVLLFFLYQ) threads the bilayer. Residue Cys-442 participates in heme binding.

Belongs to the cytochrome P450 family. The cofactor is heme.

The protein localises to the endoplasmic reticulum membrane. The enzyme catalyses an (E)-omega-(methylsulfanyl)-alkanal oxime + glutathione + reduced [NADPH--hemoprotein reductase] + O2 = an S-[(1E)-1-(hydroxyimino)-omega-(methylsulfanyl)alkyl]-L-glutathione + oxidized [NADPH--hemoprotein reductase] + 2 H2O + H(+). In terms of biological role, involved in the metabolism of aliphatic and aromatic oximes. Involved in the biosynthesis of both short-chain and long-chain aliphatic glucosinolates. This chain is Cytochrome P450 83A1 (CYP83A1), found in Arabidopsis thaliana (Mouse-ear cress).